A 361-amino-acid chain; its full sequence is Chorismate synthase (361 aa).

Residues R48 and R54 each coordinate NADP(+). FMN contacts are provided by residues 131-133, 243-244, G287, 302-306, and R328; these read RSS, NA, and KPTSS.

This sequence belongs to the chorismate synthase family. In terms of assembly, homotetramer. The cofactor is FMNH2.

The catalysed reaction is 5-O-(1-carboxyvinyl)-3-phosphoshikimate = chorismate + phosphate. The protein operates within metabolic intermediate biosynthesis; chorismate biosynthesis; chorismate from D-erythrose 4-phosphate and phosphoenolpyruvate: step 7/7. In terms of biological role, catalyzes the anti-1,4-elimination of the C-3 phosphate and the C-6 proR hydrogen from 5-enolpyruvylshikimate-3-phosphate (EPSP) to yield chorismate, which is the branch point compound that serves as the starting substrate for the three terminal pathways of aromatic amino acid biosynthesis. This reaction introduces a second double bond into the aromatic ring system. This chain is Chorismate synthase, found in Rhodopseudomonas palustris (strain BisB5).